Consider the following 118-residue polypeptide: Large ribosomal subunit protein bL20 (118 aa).

It belongs to the bacterial ribosomal protein bL20 family.

Its function is as follows. Binds directly to 23S ribosomal RNA and is necessary for the in vitro assembly process of the 50S ribosomal subunit. It is not involved in the protein synthesizing functions of that subunit. The sequence is that of Large ribosomal subunit protein bL20 from Buchnera aphidicola subsp. Acyrthosiphon pisum (strain 5A).